A 430-amino-acid polypeptide reads, in one-letter code: Glutamate-1-semialdehyde 2,1-aminomutase (430 aa).

Residue Lys-266 is modified to N6-(pyridoxal phosphate)lysine.

Belongs to the class-III pyridoxal-phosphate-dependent aminotransferase family. HemL subfamily. As to quaternary structure, homodimer. Requires pyridoxal 5'-phosphate as cofactor.

Its subcellular location is the cytoplasm. The catalysed reaction is (S)-4-amino-5-oxopentanoate = 5-aminolevulinate. It functions in the pathway porphyrin-containing compound metabolism; protoporphyrin-IX biosynthesis; 5-aminolevulinate from L-glutamyl-tRNA(Glu): step 2/2. The protein is Glutamate-1-semialdehyde 2,1-aminomutase of Acidithiobacillus ferrooxidans (strain ATCC 23270 / DSM 14882 / CIP 104768 / NCIMB 8455) (Ferrobacillus ferrooxidans (strain ATCC 23270)).